The sequence spans 1350 residues: Probable serine/threonine-protein kinase DDB_G0278845 (1350 aa).

Disordered stretches follow at residues 66–109 (RELN…NNIR), 121–159 (ENGL…PKGL), 179–249 (LANN…LNSI), 270–296 (SSIN…NEYS), 337–396 (NNYN…RDDL), 431–506 (GSTI…EKKK), 525–596 (NDSN…IPTP), and 612–701 (NNNS…NTNE). Positions 84–98 (KYLTSSHSSVVIPQD) are enriched in polar residues. 2 stretches are compositionally biased toward low complexity: residues 127–140 (SPTS…TPTT) and 181–210 (NNNN…NNSN). Polar residues predominate over residues 211–222 (KISRLINNSNTT). Residues 223-235 (DSNASIRSSNNNN) show a composition bias toward low complexity. A compositionally biased stretch (acidic residues) spans 236 to 246 (DDFDNNDDEDL). 2 stretches are compositionally biased toward low complexity: residues 270–293 (SSIN…DNVN) and 337–391 (NNYN…GYNN). The segment covering 431-443 (GSTIFTSTSSDIA) has biased composition (polar residues). The segment covering 454–482 (NENENENENENENENENDNDSDSENENEN) has biased composition (acidic residues). Low complexity-rich tracts occupy residues 483–495 (DNSI…KSNS) and 525–551 (NDSN…PFSP). Over residues 565–592 (PKPTLQRQRSNSKNVLYSPNASPSNSCK) the composition is skewed to polar residues. Low complexity-rich tracts occupy residues 612-637 (NNNS…NNID), 645-679 (NNNN…NNNN), and 690-701 (KKTPNNKINTNE). Residues 756 to 1082 (FTLIEKIGEG…VENIKNHIFF (327 aa)) enclose the Protein kinase domain. Residues 762–770 (IGEGGFGQV) and Lys785 contribute to the ATP site. Asp880 functions as the Proton acceptor in the catalytic mechanism. In terms of domain architecture, AGC-kinase C-terminal spans 1083 to 1203 (NGVPWGKLHD…PRADDQPLLW (121 aa)). Disordered stretches follow at residues 1129–1159 (SLLP…NDKM), 1190–1219 (GFTY…NNNN), 1232–1285 (NNNN…NKTV), and 1300–1350 (NCNN…KQQQ). A compositionally biased stretch (pro residues) spans 1131 to 1142 (LPPPLPPPPQTP). 3 stretches are compositionally biased toward low complexity: residues 1204-1219 (NNNN…NNNN), 1232-1283 (NNNN…SNNK), and 1300-1313 (NCNN…NNIN). Polar residues-rich tracts occupy residues 1314–1330 (TGNL…SGEN) and 1338–1350 (PTSP…KQQQ).

It belongs to the protein kinase superfamily. AGC Ser/Thr protein kinase family.

The enzyme catalyses L-seryl-[protein] + ATP = O-phospho-L-seryl-[protein] + ADP + H(+). It catalyses the reaction L-threonyl-[protein] + ATP = O-phospho-L-threonyl-[protein] + ADP + H(+). The polypeptide is Probable serine/threonine-protein kinase DDB_G0278845 (Dictyostelium discoideum (Social amoeba)).